A 53-amino-acid chain; its full sequence is Metallothionein (53 aa).

Belongs to the metallothionein superfamily. Type 14 family.

In terms of biological role, this protein complexes cadmium, zinc and copper. In Synechococcus sp, this protein is Metallothionein.